A 358-amino-acid chain; its full sequence is Putative UDP-kanosamine synthase oxidoreductase subunit (358 aa).

In terms of assembly, interacts with RifK.

It carries out the reaction UDP-alpha-D-glucose + NAD(+) = UDP-3-oxo-alpha-D-glucose + NADH + H(+). It functions in the pathway antibiotic biosynthesis; rifamycin B biosynthesis. In a complex with RifK, RifL may catalyze the oxidation of UDP-glucose to UDP-3-keto-D-glucose, which would then be used by RifK to produce UDP-kanosamine. Is not able to use dTDP-glucose as substrate. The sequence is that of Putative UDP-kanosamine synthase oxidoreductase subunit (rifL) from Amycolatopsis mediterranei (strain S699) (Nocardia mediterranei).